We begin with the raw amino-acid sequence, 1188 residues long: DNA polymerase (1188 aa).

Positions 1–74 are disordered; sequence MALVPSPRAG…PAANNVSLTP (74 aa). A compositionally biased stretch (low complexity) spans 31–41; it reads STAGAAPTATR.

It belongs to the DNA polymerase type-B family. In terms of assembly, heterodimer with the terminal protein; this heterodimer binds to bp 9 to 18 of the genome. Forms a complex with viral pTP, DBP and hosts NFIA and POU2F1/OCT1 for initiation of replication.

The protein resides in the host nucleus. The enzyme catalyses DNA(n) + a 2'-deoxyribonucleoside 5'-triphosphate = DNA(n+1) + diphosphate. Functionally, eukaryotic-type DNA polymerase involved in viral genomic replication. DNA synthesis is protein primed, and acts in a strand displacement replication. Assembles in complex with viral pTP, DBP, host NFIA and host POU2F1/OCT1 on viral origin of replication. The polymerase covalently transfers dCMP onto pTP, thereby initiating complementary strand synthesis. The chain is DNA polymerase from Human adenovirus F serotype 40 (HAdV-40).